The primary structure comprises 228 residues: Triosephosphate isomerase (228 aa).

A substrate-binding site is contributed by 11–13 (NFK). H95 serves as the catalytic Electrophile. E143 (proton acceptor) is an active-site residue. Residues I148, G183, and 204-205 (AS) contribute to the substrate site.

Belongs to the triosephosphate isomerase family. In terms of assembly, homotetramer; dimer of dimers.

It localises to the cytoplasm. It catalyses the reaction D-glyceraldehyde 3-phosphate = dihydroxyacetone phosphate. The protein operates within carbohydrate biosynthesis; gluconeogenesis. It functions in the pathway carbohydrate degradation; glycolysis; D-glyceraldehyde 3-phosphate from glycerone phosphate: step 1/1. Its function is as follows. Involved in the gluconeogenesis. Catalyzes stereospecifically the conversion of dihydroxyacetone phosphate (DHAP) to D-glyceraldehyde-3-phosphate (G3P). The protein is Triosephosphate isomerase of Pyrococcus abyssi (strain GE5 / Orsay).